A 79-amino-acid chain; its full sequence is Delta-hormotoxin-Cpt1b (79 aa).

An N-terminal signal peptide occupies residues 1-20 (MKTQVLALFVLCVLFCLAES). Residues 21–31 (RTTLNKRNDIE) constitute a propeptide that is removed on maturation. Cystine bridges form between cysteine 36-cysteine 75, cysteine 38-cysteine 66, and cysteine 56-cysteine 76.

This sequence belongs to the sea anemone sodium channel inhibitory toxin family.

It is found in the secreted. It localises to the nematocyst. In terms of biological role, in neuromuscular preparation of crustaceans, the toxin increased neurotransmitter release, causing repetitive firing of the axons. May affect sodium channels (Nav). This Calliactis parasitica (Sea anemone) protein is Delta-hormotoxin-Cpt1b.